We begin with the raw amino-acid sequence, 339 residues long: MSSGRGPRIPEYWYGQVPVPPFMRFMEVIYAGAVSLRRLAYRRGWRRRYGVAVPVVVIGNLVAGGTGKTPLTIEIVARLREAGWTPGIASRGYGRRDPKTPRWIQPDTPIELAGDEPAMIAWKTGMRVRVDVDRSAAARALVAEGCDIVVCDDGLQHYRLMRDIEIEVIDGQRRYGNGHLLPAGPLREPMVRGRLCDFRVLNAGQYSDRPTSGFGPGDWQMRLHIDHVQSLQGSRRRSLDAFSGQRVHAVAGIAHPERFFAMLRQRGIGVVPHAFPDHHFYRAEDFTFGSRLPVLMTDKDAVKCRAFADDWFFSVPLRVELPTAFWTALFDRLERLVSC.

62–69 (VAGGTGKT) contributes to the ATP binding site.

The protein belongs to the LpxK family.

The catalysed reaction is a lipid A disaccharide + ATP = a lipid IVA + ADP + H(+). The protein operates within glycolipid biosynthesis; lipid IV(A) biosynthesis; lipid IV(A) from (3R)-3-hydroxytetradecanoyl-[acyl-carrier-protein] and UDP-N-acetyl-alpha-D-glucosamine: step 6/6. In terms of biological role, transfers the gamma-phosphate of ATP to the 4'-position of a tetraacyldisaccharide 1-phosphate intermediate (termed DS-1-P) to form tetraacyldisaccharide 1,4'-bis-phosphate (lipid IVA). The polypeptide is Tetraacyldisaccharide 4'-kinase (Xylella fastidiosa (strain 9a5c)).